The primary structure comprises 241 residues: Probable transcriptional regulatory protein SAR11_0592 (241 aa).

The segment at 1 to 24 (MSGHSKWASIKHSKGKADKQRSKV) is disordered.

The protein belongs to the TACO1 family.

Its subcellular location is the cytoplasm. The sequence is that of Probable transcriptional regulatory protein SAR11_0592 from Pelagibacter ubique (strain HTCC1062).